An 833-amino-acid chain; its full sequence is Leucine--tRNA ligase (833 aa).

Residues 41–52 (PYPSGAGLHVGH) carry the 'HIGH' region motif. The short motif at 610-614 (KMSKS) is the 'KMSKS' region element. Lys613 lines the ATP pocket.

Belongs to the class-I aminoacyl-tRNA synthetase family.

The protein resides in the cytoplasm. The enzyme catalyses tRNA(Leu) + L-leucine + ATP = L-leucyl-tRNA(Leu) + AMP + diphosphate. In Streptococcus pneumoniae serotype 19F (strain G54), this protein is Leucine--tRNA ligase.